Reading from the N-terminus, the 263-residue chain is Type-2Bb cytolytic delta-endotoxin (263 aa).

This sequence belongs to the cyt1/cyt2 endotoxin family. Active after proteolytic processing.

Its function is as follows. Kills the larvae of dipteran insects by making pores in the epithelial cell membrane of the insect midgut. The chain is Type-2Bb cytolytic delta-endotoxin (cyt2Bb1) from Bacillus thuringiensis subsp. jegathesan.